Here is a 117-residue protein sequence, read N- to C-terminus: cAMP-regulated phosphoprotein 19-A (117 aa).

Residues 1–37 are compositionally biased toward basic and acidic residues; sequence MSGENQETKAQEESSALEQKEIDDKVVSPEKSEEIKL. The tract at residues 1-54 is disordered; sequence MSGENQETKAQEESSALEQKEIDDKVVSPEKSEEIKLKARYPNLGPKPGGSDFL. At serine 28 the chain carries Phosphoserine; by CDK2. Serine 67 bears the Phosphoserine; by GWL mark. The tract at residues 78–117 is disordered; it reads KNKQLPTAASDKTEVTGDHIPTPQDLPQRKPSLVASKLAG. Threonine 99 is subject to Phosphothreonine; by CDK2. Serine 109 carries the post-translational modification Phosphoserine; by PKA.

It belongs to the endosulfine family. As to quaternary structure, interacts (when phosphorylated at Ser-67) with ppp2r2d. In terms of processing, phosphorylation at Ser-67 by gwl during mitosis is essential for interaction with ppp2r2d (PR55-delta) and subsequent inactivation of PP2A. Phosphorylated by PKA.

Its subcellular location is the cytoplasm. Its function is as follows. Protein phosphatase inhibitor that specifically inhibits protein phosphatase 2A (PP2A) during mitosis. When phosphorylated at Ser-67 during mitosis, specifically interacts with ppp2r2d (PR55-delta) and inhibits its activity, leading to inactivation of PP2A, an essential condition to keep cyclin-B1-CDK1 activity high during M phase. This chain is cAMP-regulated phosphoprotein 19-A (arpp19-a), found in Xenopus laevis (African clawed frog).